A 354-amino-acid polypeptide reads, in one-letter code: Protein-glutamate methylesterase/protein-glutamine glutaminase of group 3 operon (354 aa).

Residues 3–121 (RILLATSTVE…MQLEQPAIEK (119 aa)) enclose the Response regulatory domain. A CheB-type methylesterase domain is found at 158-340 (PIGIVGIAAS…LESIAENITA (183 aa)). Catalysis depends on residues Ser167, His194, and Asp287.

Belongs to the CheB family.

It is found in the cytoplasm. The enzyme catalyses [protein]-L-glutamate 5-O-methyl ester + H2O = L-glutamyl-[protein] + methanol + H(+). It catalyses the reaction L-glutaminyl-[protein] + H2O = L-glutamyl-[protein] + NH4(+). Functionally, involved in chemotaxis. Part of a chemotaxis signal transduction system that modulates chemotaxis in response to various stimuli. Catalyzes the demethylation of specific methylglutamate residues introduced into the chemoreceptors (methyl-accepting chemotaxis proteins or MCP) by CheR. Also mediates the irreversible deamidation of specific glutamine residues to glutamic acid. This is Protein-glutamate methylesterase/protein-glutamine glutaminase of group 3 operon from Rhizobium meliloti (strain 1021) (Ensifer meliloti).